The primary structure comprises 596 residues: Fructan 1-exohydrolase w2 (596 aa).

The first 20 residues, 1 to 20 (MAQAWAFLLPVLVLGSYVTS), serve as a signal peptide directing secretion. Residue aspartate 75 is part of the active site. N-linked (GlcNAc...) asparagine glycans are attached at residues asparagine 168, asparagine 236, and asparagine 248. A disulfide bridge connects residues cysteine 446 and cysteine 492. Asparagine 567 carries N-linked (GlcNAc...) asparagine glycosylation.

The protein belongs to the glycosyl hydrolase 32 family.

It catalyses the reaction Hydrolysis of terminal, non-reducing (2-&gt;1)-linked beta-D-fructofuranose residues in fructans.. Its activity is regulated as follows. Inhibited by sucrose. Functionally, hydrolyzes inulin-type beta-(2,1)-fructans, but not beta-(2,1)-linkages in branched fructans. Has low activity against beta-(2,6)-linked fructans. May play a role as a beta-(2,1)-trimmer during graminan biosynthesis. The polypeptide is Fructan 1-exohydrolase w2 (Triticum aestivum (Wheat)).